The primary structure comprises 431 residues: uncharacterized protein (431 aa).

3 disordered regions span residues 31–55 (VPAS…QAGV), 257–291 (QNGG…PKQD), and 365–431 (FQSP…HRKA). Over residues 42 to 55 (VSASQPNGAHQAGV) the composition is skewed to polar residues. A compositionally biased stretch (basic and acidic residues) spans 412 to 425 (VEYRRGRSLRESRE).

This is an uncharacterized protein from Arabidopsis thaliana (Mouse-ear cress).